A 214-amino-acid chain; its full sequence is Orotate phosphoribosyltransferase (214 aa).

Residues Arg-125, Lys-126, Lys-129, His-131, and 151 to 159 (EDTSTTGNS) each bind 5-phospho-alpha-D-ribose 1-diphosphate. Residues Thr-155 and Arg-183 each contribute to the orotate site.

This sequence belongs to the purine/pyrimidine phosphoribosyltransferase family. PyrE subfamily. In terms of assembly, homodimer. It depends on Mg(2+) as a cofactor.

It carries out the reaction orotidine 5'-phosphate + diphosphate = orotate + 5-phospho-alpha-D-ribose 1-diphosphate. The protein operates within pyrimidine metabolism; UMP biosynthesis via de novo pathway; UMP from orotate: step 1/2. Its function is as follows. Catalyzes the transfer of a ribosyl phosphate group from 5-phosphoribose 1-diphosphate to orotate, leading to the formation of orotidine monophosphate (OMP). The protein is Orotate phosphoribosyltransferase of Tropheryma whipplei (strain Twist) (Whipple's bacillus).